The sequence spans 65 residues: U11-theraphotoxin-Cg1a (65 aa).

The signal sequence occupies residues 1–21; the sequence is MKTTILLVILGLTLLFALSAA. Residues 22–29 constitute a propeptide that is removed on maturation; the sequence is TELKDEER. Intrachain disulfides connect Cys-31-Cys-45, Cys-38-Cys-50, and Cys-44-Cys-57.

Belongs to the neurotoxin 10 (Hwtx-1) family. 32 (Jztx-16) subfamily. In terms of tissue distribution, expressed by the venom gland.

Its subcellular location is the secreted. In terms of biological role, probable ion channel inhibitor. The chain is U11-theraphotoxin-Cg1a from Chilobrachys guangxiensis (Chinese earth tiger tarantula).